Consider the following 412-residue polypeptide: Nuclear hormone receptor family member nhr-61 (412 aa).

Residues 1–19 are compositionally biased toward low complexity; that stretch reads MIVDSISSSTASTSSSSPT. Residues 1 to 23 form a disordered region; that stretch reads MIVDSISSSTASTSSSSPTRGTP. Residues 27–102 constitute a DNA-binding region (nuclear receptor); sequence SLQCAVCGDV…VGMNPRAVQG (76 aa). 2 NR C4-type zinc fingers span residues 30-50 and 66-90; these read CAVC…CNGC and CRHG…LTRC. Residues 144-407 form the NR LBD domain; the sequence is KKEQIIDNLR…DWSQELRDHR (264 aa).

It belongs to the nuclear hormone receptor family.

The protein resides in the nucleus. Its function is as follows. Orphan nuclear receptor. The polypeptide is Nuclear hormone receptor family member nhr-61 (nhr-61) (Caenorhabditis elegans).